The chain runs to 108 residues: Ribonuclease P protein component 4 (108 aa).

Residues Cys-60, Cys-63, Cys-86, and Cys-89 each contribute to the Zn(2+) site.

The protein belongs to the eukaryotic/archaeal RNase P protein component 4 family. In terms of assembly, consists of a catalytic RNA component and at least 4-5 protein subunits. Requires Zn(2+) as cofactor.

Its subcellular location is the cytoplasm. The enzyme catalyses Endonucleolytic cleavage of RNA, removing 5'-extranucleotides from tRNA precursor.. Its function is as follows. Part of ribonuclease P, a protein complex that generates mature tRNA molecules by cleaving their 5'-ends. The protein is Ribonuclease P protein component 4 of Sulfurisphaera tokodaii (strain DSM 16993 / JCM 10545 / NBRC 100140 / 7) (Sulfolobus tokodaii).